The following is a 193-amino-acid chain: uncharacterized protein (193 aa).

A helical transmembrane segment spans residues 153–170 (WRYWAVIALIAAVLIYLY).

Its subcellular location is the membrane. This is an uncharacterized protein from Invertebrate iridescent virus 6 (IIV-6).